Reading from the N-terminus, the 492-residue chain is Trehalose-6-phosphate synthase (492 aa).

Residue Arg25 coordinates D-glucose 6-phosphate. UDP-alpha-D-glucose is bound at residue 45–46 (GG). Residues Tyr101 and Asp155 each contribute to the D-glucose 6-phosphate site. UDP-alpha-D-glucose is bound by residues Arg297 and Lys302. Residue Arg335 coordinates D-glucose 6-phosphate. 400 to 404 (LVAKE) provides a ligand contact to UDP-alpha-D-glucose.

It belongs to the glycosyltransferase 20 family. Homotetramer.

The enzyme catalyses ADP-alpha-D-glucose + D-glucose 6-phosphate = alpha,alpha-trehalose 6-phosphate + ADP + H(+). It carries out the reaction CDP-alpha-D-glucose + D-glucose 6-phosphate = alpha,alpha-trehalose 6-phosphate + CDP + H(+). It catalyses the reaction GDP-alpha-D-glucose + D-glucose 6-phosphate = alpha,alpha-trehalose 6-phosphate + GDP + H(+). The catalysed reaction is TDP-alpha-D-glucose + D-glucose 6-phosphate = 5-methyl-UDP + alpha,alpha-trehalose 6-phosphate + H(+). The enzyme catalyses D-glucose 6-phosphate + UDP-alpha-D-glucose = alpha,alpha-trehalose 6-phosphate + UDP + H(+). The protein operates within glycan biosynthesis; trehalose biosynthesis. Its function is as follows. Probably involved in the osmoprotection via the biosynthesis of trehalose and in the production of glycogen and alpha-glucan via the TreS-Pep2 branch involved in the biosynthesis of maltose-1-phosphate (M1P). Catalyzes the transfer of glucose from UDP-glucose (UDP-Glc) to D-glucose 6-phosphate (Glc-6-P) to form trehalose-6-phosphate. Probably also able to use ADP-Glc, CDP-Glc, GDP-Glc and TDP-Glc as glucosyl donors. The sequence is that of Trehalose-6-phosphate synthase from Mycobacterium avium (strain 104).